Consider the following 434-residue polypeptide: Putative nuclease OPG089 (434 aa).

6 residues coordinate Mg(2+): Asp-33, Asp-74, Glu-168, Asp-170, Asp-196, and Asp-198.

Belongs to the XPG/RAD2 endonuclease family. FEN1 subfamily. Requires Mg(2+) as cofactor.

It is found in the virion. Putative nuclease that seems to be required for double-strand break repair, homologous recombination, and production of full-length viral genomic DNA. The chain is Putative nuclease OPG089 (OPG089) from Vaccinia virus (strain Copenhagen) (VACV).